Here is a 51-residue protein sequence, read N- to C-terminus: DNA-directed RNA polymerases II, IV and V subunit 12 (51 aa).

Residues cysteine 12, cysteine 15, cysteine 29, and cysteine 32 each coordinate Zn(2+).

This sequence belongs to the archaeal Rpo12/eukaryotic RPC10 RNA polymerase subunit family. As to quaternary structure, component of the RNA polymerase II, IV and V complexes. Associates with the mediator complex. Interacts with NRPD1.

Its subcellular location is the nucleus. DNA-dependent RNA polymerase catalyzes the transcription of DNA into RNA using the four ribonucleoside triphosphates as substrates. Component of RNA polymerase II which synthesizes mRNA precursors and many functional non-coding RNAs. Pol II is the central component of the basal RNA polymerase II transcription machinery. It is composed of mobile elements that move relative to each other. Component of RNA polymerases IV and V which mediate short-interfering RNAs (siRNA) accumulation and subsequent RNA-directed DNA methylation-dependent (RdDM) transcriptional gene silencing (TGS) of endogenous repeated sequences, including transposable elements. This Arabidopsis thaliana (Mouse-ear cress) protein is DNA-directed RNA polymerases II, IV and V subunit 12 (NRPB12).